The primary structure comprises 407 residues: uncharacterized protein (407 aa).

12 helical membrane-spanning segments follow: residues 22 to 42 (IVSVVSFTFICYLTIGLPLAV), 51 to 71 (LGFSAIVAGAAISVQYFATLA), 101 to 121 (ALLLSAFAFARWPAASIVLLV), 126 to 146 (VLGIGESLVGTGAILWGIGRV), 154 to 174 (VISWNGIATYGALAIGAPVGV), 179 to 199 (ALIPAVLGMLVIALAALGYYL), 227 to 247 (GLGLALGSAGFGSIATFITLY), 258 to 278 (LSLTVFGTLFIGARLLFANTI), 286 to 306 (VAIVSFAFECAGLLMLWLAPV), 309 to 329 (VALVGAALTGFGFALIFPALG), 347 to 367 (AYSVFLDLSLGITGPLAGYVA), and 369 to 389 (AFGYPQVFLCAAVAAAAGVAL).

Belongs to the major facilitator superfamily. YhhS family.

It is found in the cell inner membrane. This is an uncharacterized protein from Burkholderia pseudomallei (strain 1106a).